The following is a 160-amino-acid chain: 6,7-dimethyl-8-ribityllumazine synthase (160 aa).

5-amino-6-(D-ribitylamino)uracil is bound by residues phenylalanine 22, 57–59 (TYE), and 81–83 (TII). (2S)-2-hydroxy-3-oxobutyl phosphate is bound at residue 86–87 (QT). Histidine 89 functions as the Proton donor in the catalytic mechanism. Leucine 114 provides a ligand contact to 5-amino-6-(D-ribitylamino)uracil. A (2S)-2-hydroxy-3-oxobutyl phosphate-binding site is contributed by arginine 128.

It belongs to the DMRL synthase family. In terms of assembly, forms an icosahedral capsid composed of 60 subunits, arranged as a dodecamer of pentamers.

The enzyme catalyses (2S)-2-hydroxy-3-oxobutyl phosphate + 5-amino-6-(D-ribitylamino)uracil = 6,7-dimethyl-8-(1-D-ribityl)lumazine + phosphate + 2 H2O + H(+). It participates in cofactor biosynthesis; riboflavin biosynthesis; riboflavin from 2-hydroxy-3-oxobutyl phosphate and 5-amino-6-(D-ribitylamino)uracil: step 1/2. Catalyzes the formation of 6,7-dimethyl-8-ribityllumazine by condensation of 5-amino-6-(D-ribitylamino)uracil with 3,4-dihydroxy-2-butanone 4-phosphate. This is the penultimate step in the biosynthesis of riboflavin. This is 6,7-dimethyl-8-ribityllumazine synthase from Buchnera aphidicola subsp. Acyrthosiphon pisum (strain APS) (Acyrthosiphon pisum symbiotic bacterium).